Consider the following 79-residue polypeptide: MAKLSFLSLFLLCLVATATAQNCGRQAGNRACANGLCCSQYGFCGSTSEYCSRANGCQSNCRGGGGAGGAGGGAGGGSP.

Positions 1–20 are cleaved as a signal peptide; sequence MAKLSFLSLFLLCLVATATA. A Chitin-binding type-1 domain is found at 21 to 63; the sequence is QNCGRQAGNRACANGLCCSQYGFCGSTSEYCSRANGCQSNCRG. 4 cysteine pairs are disulfide-bonded: C23-C38, C32-C44, C37-C51, and C57-C61. A propeptide spanning residues 64–79 is cleaved from the precursor; it reads GGGAGGAGGGAGGGSP.

As to expression, leaves (at protein level).

Chitin-binding protein which functions in defense against chitin-containing fungal pathogens. The protein is Morintide mO2 of Moringa oleifera (Horseradish tree).